Consider the following 342-residue polypeptide: Acetoin:2,6-dichlorophenolindophenol oxidoreductase subunit beta (342 aa).

In terms of assembly, tetramer of 2 alpha and 2 beta subunits.

It participates in ketone degradation; acetoin degradation. Catalyzes the 2,6-dichlorophenolindophenol-dependent cleavage of acetoin into acetate and acetaldehyde. In Bacillus subtilis (strain 168), this protein is Acetoin:2,6-dichlorophenolindophenol oxidoreductase subunit beta (acoB).